Reading from the N-terminus, the 195-residue chain is Envelope glycoprotein L (195 aa).

The first 25 residues, 1 to 25, serve as a signal peptide directing secretion; sequence MKIYRVLVHLSFVLGMFTKTNTVLA. Positions 28–157 are interaction with gH; that stretch reads KYDLVHGFMR…LIAPADISCY (130 aa). A gL alphaherpesvirus-type domain is found at 28–195; sequence KYDLVHGFMR…TTSGSRRANA (168 aa). 2 disulfide bridges follow: Cys-49/Cys-78 and Cys-156/Cys-178.

The protein belongs to the herpesviridae glycoprotein L (gL) family. Alphaherpesvirinae gL subfamily. As to quaternary structure, interacts with glycoprotein H (gH); this interaction is necessary for the correct processing and cell surface expression of gH. The heterodimer gH/gL seems to interact with gB trimers during fusion.

It is found in the virion membrane. The protein resides in the host cell membrane. The protein localises to the host Golgi apparatus. Its subcellular location is the host trans-Golgi network. Functionally, the heterodimer glycoprotein H-glycoprotein L is required for the fusion of viral and plasma membranes leading to virus entry into the host cell. Acts as a functional inhibitor of gH and maintains gH in an inhibited form. Upon binding to host integrins, gL dissociates from gH leading to activation of the viral fusion glycoproteins gB and gH. The polypeptide is Envelope glycoprotein L (Gallus gallus (Chicken)).